The sequence spans 260 residues: 3'-5' ssDNA/RNA exonuclease TatD (260 aa).

3 residues coordinate a divalent metal cation: glutamate 92, histidine 128, and histidine 153.

This sequence belongs to the metallo-dependent hydrolases superfamily. TatD-type hydrolase family. TatD subfamily. Monomer. It depends on Mg(2+) as a cofactor.

It is found in the cytoplasm. 3'-5' exonuclease that prefers single-stranded DNA and RNA. May play a role in the H(2)O(2)-induced DNA damage repair. This chain is 3'-5' ssDNA/RNA exonuclease TatD, found in Pectobacterium parmentieri (strain WPP163) (Pectobacterium wasabiae (strain WPP163)).